The primary structure comprises 380 residues: GDP-mannose:cellobiosyl-diphosphopolyprenol alpha-mannosyltransferase (380 aa).

The protein belongs to the glycosyltransferase group 1 family. Glycosyltransferase 4 subfamily.

It catalyses the reaction beta-D-Glc-(1-&gt;4)-alpha-D-Glc-di-trans,octa-cis-undecaprenyl diphosphate + GDP-alpha-D-mannose = alpha-D-Man-(1-&gt;3)-beta-D-Glc-(1-&gt;4)-alpha-D-Glc-1-di-trans,octa-cis-undecaprenyl diphosphate + GDP + H(+). Functionally, involved in the biosynthesis of the exopolysaccharide xanthan, a polymer that is comprised of repeating pentasaccharide units with the structure of a beta-(1,4)-linked D-glucose backbone with trisaccharide side chains composed of mannose-beta-(1,4)-glucuronic acid-beta-(1,2)-mannose attached to alternate glucose residues in the backbone by alpha-(1,3) linkages. Xanthan is involved in pathogenicity but has also been used in a variety of applications as a specialty polymer for commercial applications, including food additives, where they act as viscosifying, stabilizing, emulsifying, or gelling agents. The sequence is that of GDP-mannose:cellobiosyl-diphosphopolyprenol alpha-mannosyltransferase (gumH) from Xanthomonas campestris.